We begin with the raw amino-acid sequence, 573 residues long: MYDVIVIGAGWCGLVAAKTYLQACPDAQVLIVDGDTSIGGTWSKERLYPHLVAEAHYGLFEFSDLPMNGDSVLPDGRIPSTAVHAYLVEYATKFNLIQRIRLNTWIENVRREAGELGMHWTLTAAGSQEQLHAKKVIITTGLTSEAFIPSLPGRDEFEGEVLHSKALGHPQTVERISDPSIRHVVVYGGSKSAFDAVYLLLRAGKTVDWVIREGGGGPSMMTPLSVLGQPSFRLNNSRLLALLSPHPFGTPGEQLSWWQRVVHHRSGQWAQFMILTIWRVMNYLFLRPWGYDSSPNGKRLKPLLGLDSLFWSPATLGVMTHPELWEEIHSGQRVKIHRDAITGLARDKRVMLSSGQELSSADLVVCATGWHARHSFFAPEEQLAVGLPGTASFDPKSQQKWLDLQRTADREITEELPILQKNPIPPPPLRCEDDHHLYRFIAPSRETPSHERSIAFVGFLRTAGAPIVYEAQSLWATAYLTGALEVPEAPQREREIARTNAWIRRRYLCGRKVPFALFDFLPYVDMLYRDLGINPNRKPNQIAELCGLYRPQDFKGVVSEWLANQQAKDVNGN.

An N-terminal signal peptide occupies residues 1-17; it reads MYDVIVIGAGWCGLVAA. Residue isoleucine 106 coordinates FAD. The N-linked (GlcNAc...) asparagine glycan is linked to asparagine 235.

Belongs to the FAD-binding monooxygenase family. The cofactor is FAD.

It functions in the pathway antifungal biosynthesis. FAD-dependent monooxygenase; part of the gene cluster that mediates the biosynthesis of the tetrahydropyranyl antifungal agent restricticin that acts as an inhibitor of CYP51 and blocks the ergosterol biosynthesis. The highly reducing polyketide synthase resH, the short chain dehydrogenase resG, the cyclase resF, the FAD-dependent monooxygenase resA and the enoylreductase resD are required to generate the first stable intermediate desmethylrestrictinol. ResH with resD biosynthesize the first polyketide chain intermediate that is reduced by resG, followed by epoxidation by resA before 6-endo cyclization via epoxide opening by resF leads to desmethylrestrictinol. The methyltransferase resE then catalyzes the C4 O-methylation of desmethylrestrictinol to produce restrictinol, and the nonribosomal peptide synthetase resC catalyzes the C3 esterification of restrictinol with glycine that leads to restricticin. The sequence is that of FAD-dependent monooxygenase resA from Aspergillus sclerotiorum.